The chain runs to 140 residues: Nucleoside diphosphate kinase (140 aa).

ATP-binding residues include lysine 11, phenylalanine 59, arginine 87, threonine 93, arginine 104, and asparagine 114. The active-site Pros-phosphohistidine intermediate is histidine 117.

This sequence belongs to the NDK family. As to quaternary structure, homotetramer. Mg(2+) serves as cofactor.

It is found in the cytoplasm. The catalysed reaction is a 2'-deoxyribonucleoside 5'-diphosphate + ATP = a 2'-deoxyribonucleoside 5'-triphosphate + ADP. It carries out the reaction a ribonucleoside 5'-diphosphate + ATP = a ribonucleoside 5'-triphosphate + ADP. Its function is as follows. Major role in the synthesis of nucleoside triphosphates other than ATP. The ATP gamma phosphate is transferred to the NDP beta phosphate via a ping-pong mechanism, using a phosphorylated active-site intermediate. This chain is Nucleoside diphosphate kinase, found in Nitrobacter hamburgensis (strain DSM 10229 / NCIMB 13809 / X14).